The chain runs to 428 residues: C4-dicarboxylate transport protein (428 aa).

Helical transmembrane passes span 4–24, 44–64, 76–96, 142–162, 184–204, 222–242, 289–309, 326–346, and 352–372; these read SLFK…ILLG, LIKM…IAGM, VALL…LIIV, IGAF…MFGF, VIFG…FGAM, LIVC…GSIA, VVGL…SIYL, IFHQ…AAGV, and IVLA…LALI.

This sequence belongs to the dicarboxylate/amino acid:cation symporter (DAACS) (TC 2.A.23) family.

The protein resides in the cell inner membrane. Responsible for the transport of dicarboxylates such as succinate, fumarate, and malate from the periplasm across the membrane. The chain is C4-dicarboxylate transport protein from Citrobacter koseri (strain ATCC BAA-895 / CDC 4225-83 / SGSC4696).